The chain runs to 178 residues: UPF0302 protein Bcer98_1244 (178 aa).

This sequence belongs to the UPF0302 family.

In Bacillus cytotoxicus (strain DSM 22905 / CIP 110041 / 391-98 / NVH 391-98), this protein is UPF0302 protein Bcer98_1244.